Consider the following 186-residue polypeptide: Adenine phosphoribosyltransferase (186 aa).

Belongs to the purine/pyrimidine phosphoribosyltransferase family. Homodimer.

The protein resides in the cytoplasm. The enzyme catalyses AMP + diphosphate = 5-phospho-alpha-D-ribose 1-diphosphate + adenine. Its pathway is purine metabolism; AMP biosynthesis via salvage pathway; AMP from adenine: step 1/1. In terms of biological role, catalyzes a salvage reaction resulting in the formation of AMP, that is energically less costly than de novo synthesis. This Sulfurovum sp. (strain NBC37-1) protein is Adenine phosphoribosyltransferase.